The primary structure comprises 136 residues: Large ribosomal subunit protein uL22 (136 aa).

This sequence belongs to the universal ribosomal protein uL22 family. In terms of assembly, part of the 50S ribosomal subunit.

This protein binds specifically to 23S rRNA; its binding is stimulated by other ribosomal proteins, e.g. L4, L17, and L20. It is important during the early stages of 50S assembly. It makes multiple contacts with different domains of the 23S rRNA in the assembled 50S subunit and ribosome. In terms of biological role, the globular domain of the protein is located near the polypeptide exit tunnel on the outside of the subunit, while an extended beta-hairpin is found that lines the wall of the exit tunnel in the center of the 70S ribosome. The sequence is that of Large ribosomal subunit protein uL22 from Bacteroides fragilis (strain ATCC 25285 / DSM 2151 / CCUG 4856 / JCM 11019 / LMG 10263 / NCTC 9343 / Onslow / VPI 2553 / EN-2).